A 256-amino-acid polypeptide reads, in one-letter code: Ubiquinone/menaquinone biosynthesis C-methyltransferase UbiE (256 aa).

S-adenosyl-L-methionine-binding positions include T79, D100, and D128–A129.

This sequence belongs to the class I-like SAM-binding methyltransferase superfamily. MenG/UbiE family.

It catalyses the reaction a 2-demethylmenaquinol + S-adenosyl-L-methionine = a menaquinol + S-adenosyl-L-homocysteine + H(+). It carries out the reaction a 2-methoxy-6-(all-trans-polyprenyl)benzene-1,4-diol + S-adenosyl-L-methionine = a 5-methoxy-2-methyl-3-(all-trans-polyprenyl)benzene-1,4-diol + S-adenosyl-L-homocysteine + H(+). It participates in quinol/quinone metabolism; menaquinone biosynthesis; menaquinol from 1,4-dihydroxy-2-naphthoate: step 2/2. Its pathway is cofactor biosynthesis; ubiquinone biosynthesis. In terms of biological role, methyltransferase required for the conversion of demethylmenaquinol (DMKH2) to menaquinol (MKH2) and the conversion of 2-polyprenyl-6-methoxy-1,4-benzoquinol (DDMQH2) to 2-polyprenyl-3-methyl-6-methoxy-1,4-benzoquinol (DMQH2). The sequence is that of Ubiquinone/menaquinone biosynthesis C-methyltransferase UbiE from Pseudomonas fluorescens (strain SBW25).